The following is a 907-amino-acid chain: Protein translocase subunit SecA (907 aa).

ATP is bound by residues glutamine 87, 105-109 (GEGKT), and aspartate 510. Zn(2+)-binding residues include cysteine 892, cysteine 894, cysteine 903, and histidine 904.

The protein belongs to the SecA family. As to quaternary structure, monomer and homodimer. Part of the essential Sec protein translocation apparatus which comprises SecA, SecYEG and auxiliary proteins SecDF-YajC and YidC. It depends on Zn(2+) as a cofactor.

The protein resides in the cell inner membrane. It is found in the cytoplasm. The enzyme catalyses ATP + H2O + cellular proteinSide 1 = ADP + phosphate + cellular proteinSide 2.. In terms of biological role, part of the Sec protein translocase complex. Interacts with the SecYEG preprotein conducting channel. Has a central role in coupling the hydrolysis of ATP to the transfer of proteins into and across the cell membrane, serving both as a receptor for the preprotein-SecB complex and as an ATP-driven molecular motor driving the stepwise translocation of polypeptide chains across the membrane. In Acinetobacter baumannii (strain AB0057), this protein is Protein translocase subunit SecA.